A 102-amino-acid chain; its full sequence is uncharacterized protein (102 aa).

This is an uncharacterized protein from Methanocaldococcus jannaschii (strain ATCC 43067 / DSM 2661 / JAL-1 / JCM 10045 / NBRC 100440) (Methanococcus jannaschii).